The following is a 195-amino-acid chain: Glycine-rich protein A3 (195 aa).

Disordered stretches follow at residues 23–103 (AGGG…GVAG) and 159–182 (VMES…GSNL). Residues 47–77 (PAGGGYPPQGYPPAGGGYPPQGYPPAGGGYP) show a composition bias toward gly residues. The segment covering 82 to 94 (PPAGHHSGSSAPH) has biased composition (low complexity). A compositionally biased stretch (basic and acidic residues) spans 163 to 175 (LSRESTGRARSTD).

This chain is Glycine-rich protein A3, found in Daucus carota (Wild carrot).